The following is a 394-amino-acid chain: Phosphoglycerate kinase (394 aa).

Substrate-binding positions include 21–23 (DFN), R36, 59–62 (HLGR), R118, and R151. The residue at position 183 (S183) is a Phosphoserine. K201 lines the ATP pocket. A Phosphothreonine modification is found at T299. Residues E323 and 350-353 (GGDS) each bind ATP.

The protein belongs to the phosphoglycerate kinase family. Monomer.

It localises to the cytoplasm. The catalysed reaction is (2R)-3-phosphoglycerate + ATP = (2R)-3-phospho-glyceroyl phosphate + ADP. It functions in the pathway carbohydrate degradation; glycolysis; pyruvate from D-glyceraldehyde 3-phosphate: step 2/5. This is Phosphoglycerate kinase from Halalkalibacterium halodurans (strain ATCC BAA-125 / DSM 18197 / FERM 7344 / JCM 9153 / C-125) (Bacillus halodurans).